Here is a 607-residue protein sequence, read N- to C-terminus: Threonine--tRNA ligase (607 aa).

A catalytic region spans residues 200-502 (DHRKLGRELG…LIEEYAGDFP (303 aa)). Residues cysteine 299, histidine 350, and histidine 479 each contribute to the Zn(2+) site.

It belongs to the class-II aminoacyl-tRNA synthetase family. Homodimer. Zn(2+) serves as cofactor.

Its subcellular location is the cytoplasm. The enzyme catalyses tRNA(Thr) + L-threonine + ATP = L-threonyl-tRNA(Thr) + AMP + diphosphate + H(+). Functionally, catalyzes the attachment of threonine to tRNA(Thr) in a two-step reaction: L-threonine is first activated by ATP to form Thr-AMP and then transferred to the acceptor end of tRNA(Thr). Also edits incorrectly charged L-seryl-tRNA(Thr). The chain is Threonine--tRNA ligase from Synechococcus sp. (strain ATCC 27144 / PCC 6301 / SAUG 1402/1) (Anacystis nidulans).